A 281-amino-acid chain; its full sequence is Aspartate/glutamate leucyltransferase (281 aa).

Belongs to the R-transferase family. Bpt subfamily.

Its subcellular location is the cytoplasm. The catalysed reaction is N-terminal L-glutamyl-[protein] + L-leucyl-tRNA(Leu) = N-terminal L-leucyl-L-glutamyl-[protein] + tRNA(Leu) + H(+). It carries out the reaction N-terminal L-aspartyl-[protein] + L-leucyl-tRNA(Leu) = N-terminal L-leucyl-L-aspartyl-[protein] + tRNA(Leu) + H(+). Functionally, functions in the N-end rule pathway of protein degradation where it conjugates Leu from its aminoacyl-tRNA to the N-termini of proteins containing an N-terminal aspartate or glutamate. In Paracoccus denitrificans (strain Pd 1222), this protein is Aspartate/glutamate leucyltransferase.